We begin with the raw amino-acid sequence, 878 residues long: MSKVHNSEYIKELSVDNTSYKIYDINKAASDIELPLKKLPYSLRVLFENVLRSNGSKQNLLVFKEWLKTKESDAEIDFMPARVLMQDFTGVPAIVDLAAMRDAMKKIGGDPLKINPLIPVDLVIDHSVSVDSYAAKDSFDKNVQMEMKRNIERYQFLKWGQQAFNNFKVVPPGTGICHQVNLEYLAKVVWHKDGLAYPDSLVGTDSHTTMVNGLSVLGWGVGGIEAEAAMLGQPLTMILPEVIGVKLTGKLTGIATATDLVLTVTEMLRKKKVVGKFVEFFGEGLKNLTIADRATISNMSPEYGATCGFFPIDQETIKYLELTGREKTQIKLVEKYANEQNLWYDFEHEAEYTEILELDLSMVHSSLAGPRRPQDRVDLNDVANNFKHELPNFGIENKDIDKKYAVANQNYEIGNGDVVIAAITSCTNTSNPSVMIGAALLAKKALEHGLKVKPWVKTSLAPGSKVVTEYLKLSGLDKYLDELGFNLVGYGCTTCIGNSGPLNPEIEETINKNGLVVASVLSGNRNFEGRINPLTKASYLGSPILVVAYALSGTLNIDLNNQPIGKNIYLKDIWPSKEEIDEVIANSINSSMFIEKYSDIFSGTKEWKDLQITTSSTYNWNKNSTYINNPPYFEDIGSKNNIKDIKSAKILAIFGDSITTDHISPAGSISKTSPAAKYLTDNHIEPLDFNSYGSRRGNHEVMMRGTFANIRIKNEMCKGVEGGFTINQLSSTQQTIYDAAMDYKANDVPVVIFAGKEYGSGSSRDWAAKGPQLLGVKAVIAESFERIHRSNLVGMGILPLTFTGNNTRLDLKLDGSETIDIIGLSEQIKPYNPVKCMIKKQTGETRTIDLILQIFTDNEINYIKHGSIMHFVVENLKG.

Residues cysteine 426, cysteine 492, and cysteine 495 each contribute to the [4Fe-4S] cluster site.

Belongs to the aconitase/IPM isomerase family. As to quaternary structure, monomer. [4Fe-4S] cluster is required as a cofactor.

The catalysed reaction is citrate = D-threo-isocitrate. The enzyme catalyses (2S,3R)-3-hydroxybutane-1,2,3-tricarboxylate = 2-methyl-cis-aconitate + H2O. Its pathway is carbohydrate metabolism; tricarboxylic acid cycle; isocitrate from oxaloacetate: step 2/2. It functions in the pathway organic acid metabolism; propanoate degradation. Its function is as follows. Involved in the catabolism of short chain fatty acids (SCFA) via the tricarboxylic acid (TCA)(acetyl degradation route) and probably the 2-methylcitrate cycle I (propionate degradation route). Catalyzes the reversible isomerization of citrate to isocitrate via cis-aconitate. Could catalyze the hydration of 2-methyl-cis-aconitate to yield (2R,3S)-2-methylisocitrate. The apo form of AcnA functions as a RNA-binding regulatory protein. This is Aconitate hydratase A (acnA) from Rickettsia felis (strain ATCC VR-1525 / URRWXCal2) (Rickettsia azadi).